Consider the following 86-residue polypeptide: uncharacterized protein (86 aa).

It to C.jejuni CJ0253.

This is an uncharacterized protein from Helicobacter pylori (strain ATCC 700392 / 26695) (Campylobacter pylori).